The sequence spans 121 residues: Large ribosomal subunit protein bL12 (121 aa).

Belongs to the bacterial ribosomal protein bL12 family. Homodimer. Part of the ribosomal stalk of the 50S ribosomal subunit. Forms a multimeric L10(L12)X complex, where L10 forms an elongated spine to which 2 to 4 L12 dimers bind in a sequential fashion. Binds GTP-bound translation factors.

Forms part of the ribosomal stalk which helps the ribosome interact with GTP-bound translation factors. Is thus essential for accurate translation. The polypeptide is Large ribosomal subunit protein bL12 (Clostridium perfringens (strain 13 / Type A)).